The sequence spans 1420 residues: DNA-directed RNA polymerase subunit beta' (1420 aa).

Positions 70, 72, 85, and 88 each coordinate Zn(2+). Residues aspartate 464, aspartate 466, and aspartate 468 each contribute to the Mg(2+) site. Zn(2+) is bound by residues cysteine 823, cysteine 897, cysteine 904, and cysteine 907.

It belongs to the RNA polymerase beta' chain family. The RNAP catalytic core consists of 2 alpha, 1 beta, 1 beta' and 1 omega subunit. When a sigma factor is associated with the core the holoenzyme is formed, which can initiate transcription. Mg(2+) is required as a cofactor. The cofactor is Zn(2+).

It carries out the reaction RNA(n) + a ribonucleoside 5'-triphosphate = RNA(n+1) + diphosphate. In terms of biological role, DNA-dependent RNA polymerase catalyzes the transcription of DNA into RNA using the four ribonucleoside triphosphates as substrates. The chain is DNA-directed RNA polymerase subunit beta' from Polynucleobacter necessarius subsp. necessarius (strain STIR1).